The chain runs to 202 residues: Transmembrane 4 L6 family member 1 (202 aa).

Residues 1–9 (MCYVKCARY) are Cytoplasmic-facing. The chain crosses the membrane as a helical span at residues 10–30 (IGYSLVWAAVFCIVANALLYF). At 31–49 (PNGETKYATEDHLSRFVWY) the chain is on the extracellular side. The helical transmembrane segment at 50 to 70 (FAGIVGGGLLMLLPAFVFIGM) threads the bilayer. At 71–93 (DEEDCCGCCGYENYGKRCSMLSS) the chain is on the cytoplasmic side. Residues 94-114 (VLAALIGIVGSAYCVIVASLG) form a helical membrane-spanning segment. Residues 115-161 (LAEGPKCSDAHGVWNYTFASTEGQYLLNSSMWSKCYEPKHIVEWHVT) are Extracellular-facing. 2 N-linked (GlcNAc...) asparagine glycosylation sites follow: Asn-129 and Asn-142. A helical transmembrane segment spans residues 162–182 (LFSILLAFAAVEFILCLIQVI). The Cytoplasmic segment spans residues 183 to 202 (NGMLGGLCGYCCSRQQQYNC).

The protein belongs to the L6 tetraspanin family. Present in high molecular weight complexes in tumor cells. Interacts with SDCBP2. In terms of tissue distribution, highly expressed in skin and lung. Moderately expressed in lymph nodes and kidneys. Also present in thymic stroma and fibroblasts.

Its subcellular location is the membrane. In Mus musculus (Mouse), this protein is Transmembrane 4 L6 family member 1 (Tm4sf1).